The chain runs to 234 residues: Probable cyclic nucleotide phosphodiesterase Rmag_0669 (234 aa).

Positions 11, 13, 49, 79, 145, 184, and 186 each coordinate Fe cation. AMP-binding positions include His-13, Asp-49, and 79-80 (NH). His-186 contributes to the AMP binding site.

The protein belongs to the cyclic nucleotide phosphodiesterase class-III family. It depends on Fe(2+) as a cofactor.

The chain is Probable cyclic nucleotide phosphodiesterase Rmag_0669 from Ruthia magnifica subsp. Calyptogena magnifica.